The following is a 697-amino-acid chain: PHD finger protein At2g01810 (697 aa).

Disordered stretches follow at residues 319 to 362 (DENS…QYYS) and 457 to 478 (EQKRKKKRKVKPQETSECTSTT). Residues 339-349 (SGRDTVLDDHN) show a composition bias toward basic and acidic residues. A PHD-type zinc finger spans residues 635 to 685 (TVDCKCGARDDDGERMVACDACKVWHHTLCNSIEDDEAVPSVFLCNMCYGD).

It localises to the nucleus. The polypeptide is PHD finger protein At2g01810 (Arabidopsis thaliana (Mouse-ear cress)).